We begin with the raw amino-acid sequence, 159 residues long: Major latex protein 149 (159 aa).

This sequence belongs to the MLP family. Laticifer.

It localises to the vacuole. Its subcellular location is the cytoplasmic vesicle. Its function is as follows. Not known; MLPs constitute up to 50% of the soluble latex protein. The chain is Major latex protein 149 (MLP149) from Papaver somniferum (Opium poppy).